The sequence spans 308 residues: MRKKVLLMGRSGSGKSSMRSIVFSNYVAKDTRRLGATIDIEHSHVRFLGNLVLNLWDCGGQEAFMENYLSAQRDHIFRNVQVLIYVFDVESREFERDLVTFRNCLEATVANSPQARVFCLIHKMDLVQEDLRDLVFEERKAILLETSKDLETTCLATSIWDETLFKAWSAIVYTLIPNTPTLESHLREFAKAAEAAEVILFERTTFLVISSYSSESNPATDAHRFEKISNIVKQFKLSCSKMQAQFTTFELRGGNFSAFIVPYTEDTYILVVIADPEIESAVTLMNIQSARRFIEASKSASDGIQLQP.

GTP is bound by residues Ser-11, Gly-14, Lys-15, Ser-16, Ser-17, Thr-31, Thr-37, Gly-60, His-122, Asp-125, and Ile-159.

It belongs to the GTR/RAG GTP-binding protein family. In terms of assembly, component of the GSE complex.

Its subcellular location is the vacuole membrane. The protein resides in the cytoplasm. It localises to the nucleus. The enzyme catalyses GTP + H2O = GDP + phosphate + H(+). In terms of biological role, GTPase involved in activation of the TORC1 signaling pathway, which promotes growth and represses autophagy in nutrient-rich conditions. Also required for TORC1 inactivation during nitrogen starvation. This Schizosaccharomyces pombe (strain 972 / ATCC 24843) (Fission yeast) protein is GTP-binding protein gtr1 (gtr1).